The following is a 141-amino-acid chain: Drosulfakinins (141 aa).

The first 31 residues, 1–31 (MGLRRCTHFATLVMPLWALALFFLVVMQVPA), serve as a signal peptide directing secretion. Positions 32-73 (QTTSLQISKEDRRLQELESKMGAESEQPNANLVGPSISRFGD) are excised as a propeptide. A disordered region spans residues 49 to 69 (ESKMGAESEQPNANLVGPSIS). Phenylalanine 82 carries the phenylalanine amide modification. A propeptide spanning residues 86–111 (VPLISRPMIPIELDLLMDNDDERTKA) is cleaved from the precursor. Residue tyrosine 117 is modified to Sulfotyrosine. Phenylalanine amide is present on phenylalanine 122. Tyrosine 134 carries the sulfotyrosine modification. Phenylalanine 139 bears the Phenylalanine amide mark.

It belongs to the gastrin/cholecystokinin family.

It localises to the secreted. Functionally, drosulfakinin-0 (DSK 0) plays diverse biological roles including regulating gut muscle contraction in adults but not in larvae. The sequence is that of Drosulfakinins from Drosophila erecta (Fruit fly).